We begin with the raw amino-acid sequence, 173 residues long: NADH-ubiquinone oxidoreductase chain 6 (173 aa).

5 helical membrane passes run 1–21 (MTYF…GVAS), 27–47 (YGVV…LSLG), 48–68 (VSFV…VVFV), 87–107 (VVGY…IGGL), and 139–159 (CGVG…FVVL).

This sequence belongs to the complex I subunit 6 family.

The protein localises to the mitochondrion membrane. The catalysed reaction is a ubiquinone + NADH + 5 H(+)(in) = a ubiquinol + NAD(+) + 4 H(+)(out). Functionally, core subunit of the mitochondrial membrane respiratory chain NADH dehydrogenase (Complex I) that is believed to belong to the minimal assembly required for catalysis. Complex I functions in the transfer of electrons from NADH to the respiratory chain. The immediate electron acceptor for the enzyme is believed to be ubiquinone. The chain is NADH-ubiquinone oxidoreductase chain 6 (MT-ND6) from Synthliboramphus hypoleucus (Guadalupe murrelet).